The chain runs to 1049 residues: RTX-III toxin determinant A from serotype 2 (1049 aa).

The next 3 helical transmembrane spans lie at 154–170, 315–331, and 397–413; these read TIISGIQSVLGTVLAGI, ALIASSISLAISPLAFL, and LVGAPITLLVTGITGLI. 6 Hemolysin-type calcium-binding repeats span residues 743 to 760, 761 to 778, 779 to 796, 797 to 814, 825 to 842, and 843 to 860; these read KGSKFRDIFHGADGDDLL, NGNDGDDILYGDKGNDEL, RGDNGNDQLYGGEGDDKL, LGGNGNNYLSGGDGNDEL, RGGKGDDKLYGSSGSDLL, and DGGEGNDYLEGGDGSDFY.

The protein belongs to the RTX prokaryotic toxin (TC 1.C.11) family. In terms of processing, palmitoylated by ApxIIIC. The toxin only becomes active when modified.

The protein resides in the secreted. It is found in the host cell membrane. Functionally, does not have hemolytic activity but shows a strong cytotoxicity towards alveolar macrophages and neutrophils. The chain is RTX-III toxin determinant A from serotype 2 (apxIIIA) from Actinobacillus pleuropneumoniae (Haemophilus pleuropneumoniae).